The chain runs to 1067 residues: Isoleucine--tRNA ligase (1067 aa).

A 'HIGH' region motif is present at residues 49–59 (PYVSGAIHLGT). The 'KMSKS' region motif lies at 625 to 629 (KMSKS). Lys628 is a binding site for ATP.

Belongs to the class-I aminoacyl-tRNA synthetase family. IleS type 2 subfamily. As to quaternary structure, monomer. Requires Zn(2+) as cofactor.

It is found in the cytoplasm. It catalyses the reaction tRNA(Ile) + L-isoleucine + ATP = L-isoleucyl-tRNA(Ile) + AMP + diphosphate. Its function is as follows. Catalyzes the attachment of isoleucine to tRNA(Ile). As IleRS can inadvertently accommodate and process structurally similar amino acids such as valine, to avoid such errors it has two additional distinct tRNA(Ile)-dependent editing activities. One activity is designated as 'pretransfer' editing and involves the hydrolysis of activated Val-AMP. The other activity is designated 'posttransfer' editing and involves deacylation of mischarged Val-tRNA(Ile). The polypeptide is Isoleucine--tRNA ligase (Pyrococcus abyssi (strain GE5 / Orsay)).